Reading from the N-terminus, the 248-residue chain is UPF0246 protein A1I_02510 (248 aa).

The protein belongs to the UPF0246 family.

In Rickettsia bellii (strain OSU 85-389), this protein is UPF0246 protein A1I_02510.